The primary structure comprises 585 residues: Zinc finger protein 732 (585 aa).

The 72-residue stretch at 4–75 folds into the KRAB domain; it reads LTFRDVAIEF…KIHETVAKHP (72 aa). The C2H2-type 1; degenerate zinc-finger motif lies at 141 to 163; sequence FQCNVHVKVFSTFSNSNQRRIRH. The C2H2-type 2; degenerate zinc finger occupies 167–189; that stretch reads KHFKECGKSFQKFSDLTQHQGIH. The C2H2-type 3; degenerate zinc finger occupies 195 to 217; that stretch reads YTCEECGKDFKWYLIFNEYEIIH. The C2H2-type 4 zinc-finger motif lies at 223 to 244; it reads FTCEECGNIFTTSSNFAKHKVH. Residues 250-272 form a C2H2-type 5; degenerate zinc finger; that stretch reads YKYEECGKAFNRSSTLTKHKRIH. 9 consecutive C2H2-type zinc fingers follow at residues 278–300, 306–328, 334–356, 362–384, 390–412, 418–440, 446–468, 474–496, and 502–524; these read FTCE…KKIH, YKCQ…NRIH, YTCE…KRIH, YKCE…KSIH, HKCE…KIIH, YKCE…KKIH, YRCE…KTIH, and YECE…KKIH. The C2H2-type 15; degenerate zinc-finger motif lies at 530–552; the sequence is YRCEECGKAFRRSRVLNKYKTIH. A C2H2-type 16; degenerate zinc finger spans residues 558–580; the sequence is PKCKGCGKAFKWSSYLNQHNKIY.

This sequence belongs to the krueppel C2H2-type zinc-finger protein family.

It is found in the nucleus. In terms of biological role, may be involved in transcriptional regulation. The protein is Zinc finger protein 732 (ZNF732) of Homo sapiens (Human).